Here is a 600-residue protein sequence, read N- to C-terminus: Elongation factor 4 (600 aa).

Positions 7-189 constitute a tr-type G domain; it reads SLIRNFSIIA…ALVQRLPAPT (183 aa). Residues 19 to 24 and 136 to 139 contribute to the GTP site; these read DHGKST and NKID.

Belongs to the TRAFAC class translation factor GTPase superfamily. Classic translation factor GTPase family. LepA subfamily.

Its subcellular location is the cell inner membrane. The enzyme catalyses GTP + H2O = GDP + phosphate + H(+). Functionally, required for accurate and efficient protein synthesis under certain stress conditions. May act as a fidelity factor of the translation reaction, by catalyzing a one-codon backward translocation of tRNAs on improperly translocated ribosomes. Back-translocation proceeds from a post-translocation (POST) complex to a pre-translocation (PRE) complex, thus giving elongation factor G a second chance to translocate the tRNAs correctly. Binds to ribosomes in a GTP-dependent manner. The polypeptide is Elongation factor 4 (Gluconobacter oxydans (strain 621H) (Gluconobacter suboxydans)).